A 1441-amino-acid polypeptide reads, in one-letter code: Lysophospholipase NTE1 (1441 aa).

At 1 to 22 the chain is on the lumenal side; sequence MWLTSYVLPRLKNILLLQFHIT. A helical transmembrane segment spans residues 23 to 43; sequence LPLNYLVLLLLSTVIITYLFL. The Cytoplasmic portion of the chain corresponds to 44–1441; that stretch reads RTRILSNYSQ…ENMLQRRNSI (1398 aa). 4 disordered regions span residues 154 to 173, 210 to 236, 376 to 445, and 551 to 585; these read SNPS…PSND, THLN…TGEI, QDDT…NSSS, and NRTG…HFRN. Positions 376–388 are enriched in polar residues; it reads QDDTGSSASTIQK. Residues 572-585 are compositionally biased toward basic and acidic residues; the sequence is SRTDRSESFDHFRN. A nucleoside 3',5'-cyclic phosphate is bound by residues 592-718 and 707-836; these read NQFS…LTNS and IYLK…VAKK. In terms of domain architecture, PNPLA spans 1137–1301; it reads LVLGGGGARG…VDNLPVTEMT (165 aa). A GXGXXG motif is present at residues 1141–1146; sequence GGGARG. A GXSXG motif is present at residues 1168 to 1172; sequence GTSIG. S1170 functions as the Nucleophile in the catalytic mechanism. D1288 functions as the Proton acceptor in the catalytic mechanism. Residues 1288-1290 carry the DGA/G motif; the sequence is DGG.

Belongs to the NTE family.

The protein localises to the endoplasmic reticulum membrane. The enzyme catalyses a 1-acyl-sn-glycero-3-phosphocholine + H2O = sn-glycerol 3-phosphocholine + a fatty acid + H(+). Its activity is regulated as follows. Inhibited by organophosphorus esters. Functionally, intracellular phospholipase B that catalyzes the double deacylation of phosphatidylcholine (PC) to glycerophosphocholine (GroPCho). Plays an important role in membrane lipid homeostasis. Responsible for the rapid PC turnover in response to inositol, elevated temperatures, or when choline is present in the growth medium. This is Lysophospholipase NTE1 (NTE1) from Kluyveromyces lactis (strain ATCC 8585 / CBS 2359 / DSM 70799 / NBRC 1267 / NRRL Y-1140 / WM37) (Yeast).